Reading from the N-terminus, the 85-residue chain is Putative membrane protein insertion efficiency factor (85 aa).

Belongs to the UPF0161 family.

It is found in the cell inner membrane. In terms of biological role, could be involved in insertion of integral membrane proteins into the membrane. The polypeptide is Putative membrane protein insertion efficiency factor (Vibrio cholerae serotype O1 (strain ATCC 39315 / El Tor Inaba N16961)).